A 225-amino-acid chain; its full sequence is Agamous-like MADS-box protein MADS1 (225 aa).

Expressed in flowers and seeds.

The protein localises to the nucleus. Probable transcription factor involved in flower development. This chain is Agamous-like MADS-box protein MADS1, found in Vitis vinifera (Grape).